We begin with the raw amino-acid sequence, 109 residues long: Period circadian protein (109 aa).

Polar residues-rich tracts occupy residues 42–56 (QSYS…NLSP) and 68–80 (SSRN…NLNM). The disordered stretch occupies residues 42–109 (QSYSTPANTG…LVTLTESLLK (68 aa)). The segment covering 81-97 (GSVTNTSNTGTGTSSGS) has biased composition (low complexity).

As to quaternary structure, forms a heterodimer with timeless (TIM); the complex then translocates into the nucleus. In terms of processing, phosphorylated with a circadian rhythmicity, probably by the double-time protein (dbt). Phosphorylation could be implicated in the stability of per monomer and in the formation of heterodimer per-tim.

The protein resides in the nucleus. It is found in the cytoplasm. The protein localises to the perinuclear region. Functionally, essential for biological clock functions. Determines the period length of circadian and ultradian rhythms; an increase in PER dosage leads to shortened circadian rhythms and a decrease leads to lengthened circadian rhythms. Essential for the circadian rhythmicity of locomotor activity, eclosion behavior, and for the rhythmic component of the male courtship song that originates in the thoracic nervous system. The biological cycle depends on the rhythmic formation and nuclear localization of the TIM-PER complex. Light induces the degradation of TIM, which promotes elimination of PER. Nuclear activity of the heterodimer coordinatively regulates PER and TIM transcription through a negative feedback loop. Behaves as a negative element in circadian transcriptional loop. Does not appear to bind DNA, suggesting indirect transcriptional inhibition. The polypeptide is Period circadian protein (per) (Musca domestica (House fly)).